A 513-amino-acid polypeptide reads, in one-letter code: Probable cytosol aminopeptidase (513 aa).

Mn(2+) contacts are provided by Lys-277 and Asp-282. The active site involves Lys-289. Residues Asp-300, Asp-359, and Glu-361 each coordinate Mn(2+). Arg-363 is an active-site residue.

This sequence belongs to the peptidase M17 family. Requires Mn(2+) as cofactor.

The protein localises to the cytoplasm. It catalyses the reaction Release of an N-terminal amino acid, Xaa-|-Yaa-, in which Xaa is preferably Leu, but may be other amino acids including Pro although not Arg or Lys, and Yaa may be Pro. Amino acid amides and methyl esters are also readily hydrolyzed, but rates on arylamides are exceedingly low.. It carries out the reaction Release of an N-terminal amino acid, preferentially leucine, but not glutamic or aspartic acids.. In terms of biological role, presumably involved in the processing and regular turnover of intracellular proteins. Catalyzes the removal of unsubstituted N-terminal amino acids from various peptides. This chain is Probable cytosol aminopeptidase, found in Mycobacterium sp. (strain KMS).